Reading from the N-terminus, the 460-residue chain is Argininosuccinate lyase (460 aa).

It belongs to the lyase 1 family. Argininosuccinate lyase subfamily.

The protein localises to the cytoplasm. It catalyses the reaction 2-(N(omega)-L-arginino)succinate = fumarate + L-arginine. Its pathway is amino-acid biosynthesis; L-arginine biosynthesis; L-arginine from L-ornithine and carbamoyl phosphate: step 3/3. This chain is Argininosuccinate lyase, found in Campylobacter jejuni (strain RM1221).